A 257-amino-acid polypeptide reads, in one-letter code: 5-oxoprolinase subunit A (257 aa).

The protein belongs to the LamB/PxpA family. In terms of assembly, forms a complex composed of PxpA, PxpB and PxpC.

It catalyses the reaction 5-oxo-L-proline + ATP + 2 H2O = L-glutamate + ADP + phosphate + H(+). In terms of biological role, catalyzes the cleavage of 5-oxoproline to form L-glutamate coupled to the hydrolysis of ATP to ADP and inorganic phosphate. The chain is 5-oxoprolinase subunit A from Bacillus subtilis (strain 168).